Here is a 357-residue protein sequence, read N- to C-terminus: MGVKSLVPQELIEKIKLISPGTELRKALDDIINANFGALIFLVDDPKKYEDVIQGGFWLDTDFSAEKLYELSKMDGAIVLSEDITKIYYANVHLVPDPTIPTGETGTRHRTAERLAKQTGKVVIAVSRRRNIISLYYKNYKYVVNQVDFLISKVTQAISTLEKYKDNFNKLLSELEVLELENRVTLADVVRTLAKGFELLRIVEEIRPYIVELGEEGRLARMQLRELTEDVDDLLVLLIMDYSSEEVEEETAQNILQDFITRREPSPISISRVLGYDVQQAAQLDDVLVSARGYRLLKTVARIPLSIGYNVVRMFKTLDQISKASVEDLKKVEGIGEKRARAISESISSLKHRKTSE.

Positions 8–148 (PQELIEKIKL…NYKYVVNQVD (141 aa)) constitute a DAC domain. 3',3'-c-di-AMP-binding residues include glycine 76, leucine 94, threonine 107, threonine 111, and arginine 128.

This sequence belongs to the DisA family. Homooctamer. Mg(2+) serves as cofactor.

The enzyme catalyses 2 ATP = 3',3'-c-di-AMP + 2 diphosphate. Inhibited by 3'-dATP. Functionally, participates in a DNA-damage check-point. DisA forms globular foci that rapidly scan along the chromosomes searching for lesions. In terms of biological role, has diadenylate cyclase activity, catalyzing the condensation of 2 ATP molecules into cyclic di-AMP (c-di-AMP). c-di-AMP likely acts as a signaling molecule that may couple DNA integrity with a cellular process. This rate-limiting step is the accessibility of the active site; mutating the possible exit tunnel (residues 128-130) increases product 2-fold despite Arg-130 being important for ATP-binding. Does not convert GTP to c-di-GMP. The sequence is that of DNA integrity scanning protein DisA from Thermotoga maritima (strain ATCC 43589 / DSM 3109 / JCM 10099 / NBRC 100826 / MSB8).